A 202-amino-acid polypeptide reads, in one-letter code: ATP-dependent Clp protease proteolytic subunit (202 aa).

Residue Ser106 is the Nucleophile of the active site. His131 is a catalytic residue.

Belongs to the peptidase S14 family. As to quaternary structure, fourteen ClpP subunits assemble into 2 heptameric rings which stack back to back to give a disk-like structure with a central cavity, resembling the structure of eukaryotic proteasomes.

It localises to the cytoplasm. It carries out the reaction Hydrolysis of proteins to small peptides in the presence of ATP and magnesium. alpha-casein is the usual test substrate. In the absence of ATP, only oligopeptides shorter than five residues are hydrolyzed (such as succinyl-Leu-Tyr-|-NHMec, and Leu-Tyr-Leu-|-Tyr-Trp, in which cleavage of the -Tyr-|-Leu- and -Tyr-|-Trp bonds also occurs).. Its function is as follows. Cleaves peptides in various proteins in a process that requires ATP hydrolysis. Has a chymotrypsin-like activity. Plays a major role in the degradation of misfolded proteins. This chain is ATP-dependent Clp protease proteolytic subunit, found in Acidovorax sp. (strain JS42).